The following is a 269-amino-acid chain: Iron(3+)-hydroxamate import ATP-binding protein FhuC (269 aa).

Residues 4-240 (LSTEQLGIGY…DILKQVFQID (237 aa)) enclose the ABC transporter domain. Residues 36–43 (GPNGCGKS) and 160–171 (LLLLDEPTTYLD) each bind ATP.

This sequence belongs to the ABC transporter superfamily. Iron (Fe3+)-hydroxamate importer (TC 3.A.1.14.7) family. As to quaternary structure, the complex is composed of an ATP-binding protein (FhuC), two transmembrane proteins (FhuB and FhuG) and a solute-binding protein (FhuD or YxeB).

It localises to the cell membrane. It catalyses the reaction ATP + H2O + Fe(3+)-hydroxamate complex-[hydroxamate-binding protein]Side 1 = ADP + phosphate + Fe(3+)-hydroxamate complexSide 2 + [hydroxamate-binding protein]Side 1.. In terms of biological role, part of the ABC transporter complex FhuBGCD involved in iron(3+)-hydroxamate import. Responsible for energy coupling to the transport system. The sequence is that of Iron(3+)-hydroxamate import ATP-binding protein FhuC (fhuC) from Bacillus subtilis (strain 168).